Consider the following 530-residue polypeptide: Light-harvesting complex I LH38 proteins (530 aa).

The protein localises to the plastid. It localises to the chloroplast. The sequence is that of Light-harvesting complex I LH38 proteins from Euglena gracilis.